Reading from the N-terminus, the 407-residue chain is Semenogelin-2 (407 aa).

Positions 1–23 are cleaved as a signal peptide; it reads MKSIILFVLSLVLILEKQAAVMG. Disordered regions lie at residues 25–60, 133–158, 173–192, and 272–407; these read KDGS…TKSK, GQAH…LSSQ, KEQA…GSQS, and NLNQ…NKIS. 3 stretches are compositionally biased toward polar residues: residues 31-40, 137-158, and 174-192; these read QLPSGSSQFP, CGTQ…LSSQ, and EQAS…GSQS. The segment covering 292–310 has biased composition (basic and acidic residues); that stretch reads RTEERQLNHGEKSVQKDVS. Residues 325 to 334 are compositionally biased toward polar residues; sequence KSQNQVTIHS. The segment covering 335–345 has biased composition (basic and acidic residues); sequence QDQEHGHKENK. The segment covering 372–397 has biased composition (polar residues); the sequence is GSISIQTEEQIHGKSQNXVRIPSQAQ.

This sequence belongs to the semenogelin family. As to quaternary structure, interacts with SERPINA5.

The protein localises to the secreted. Functionally, participates in the formation of a gel matrix (sperm coagulum) entrapping the accessory gland secretions and ejaculated spermatozoa. In Pan troglodytes (Chimpanzee), this protein is Semenogelin-2 (SEMG2).